The sequence spans 432 residues: Amino-acid acetyltransferase (432 aa).

An N-acetyltransferase domain is found at 286-425 (EQLREAGIED…ASLYNFQRNS (140 aa)).

Belongs to the acetyltransferase family. ArgA subfamily.

It localises to the cytoplasm. The enzyme catalyses L-glutamate + acetyl-CoA = N-acetyl-L-glutamate + CoA + H(+). It participates in amino-acid biosynthesis; L-arginine biosynthesis; N(2)-acetyl-L-ornithine from L-glutamate: step 1/4. The polypeptide is Amino-acid acetyltransferase (Pseudomonas paraeruginosa (strain DSM 24068 / PA7) (Pseudomonas aeruginosa (strain PA7))).